The following is a 448-amino-acid chain: Exodeoxyribonuclease 7 large subunit (448 aa).

This sequence belongs to the XseA family. In terms of assembly, heterooligomer composed of large and small subunits.

It localises to the cytoplasm. It carries out the reaction Exonucleolytic cleavage in either 5'- to 3'- or 3'- to 5'-direction to yield nucleoside 5'-phosphates.. Its function is as follows. Bidirectionally degrades single-stranded DNA into large acid-insoluble oligonucleotides, which are then degraded further into small acid-soluble oligonucleotides. The sequence is that of Exodeoxyribonuclease 7 large subunit from Shewanella sp. (strain MR-7).